Consider the following 630-residue polypeptide: Coiled-coil domain-containing protein 120 (630 aa).

The involved in CYTH2-binding stretch occupies residues 31-70 (RLRGLLDRQRTLQEALSLKLQELRKVCLQEAELTGQLPPE). A coiled-coil region spans residues 109–173 (ELALEALERE…LRDVRARLGL (65 aa)). 2 stretches are compositionally biased toward low complexity: residues 212-222 (HSESSSLSESG) and 282-297 (ASPT…SASS). Disordered stretches follow at residues 212–435 (HSES…GAPR) and 457–534 (GGGT…NPLL). Residues 326–335 (RQWSGSQDSQ) show a composition bias toward polar residues. Residues Ser-358 and Ser-360 each carry the phosphoserine modification. Residues 421-434 (ARPSSAAPASRGAP) are compositionally biased toward low complexity. At Arg-435 the chain carries Omega-N-methylarginine.

Interacts with NIN and CEP170; leading to recruit them to centrosomes. Directly interacts with CYTH2; this interaction stabilizes CCDC120, possibly by preventing ubiquitination. In terms of processing, ubiquitinated; interaction with CYTH2 may prevent ubiquitination.

Its subcellular location is the cytoplasm. It localises to the cytoskeleton. It is found in the microtubule organizing center. The protein resides in the centrosome. The protein localises to the centriole. Its subcellular location is the cell projection. It localises to the neuron projection. It is found in the growth cone. The protein resides in the endosome. In terms of biological role, centriolar protein required for centriole subdistal appendage assembly and microtubule anchoring in interphase cells. Together with CCDC68, cooperate with subdistal appendage components ODF2, NIN and CEP170 for hierarchical subdistal appendage assembly. Recruits NIN and CEP170 to centrosomes. Also required for neurite growth. Localizes CYTH2 to vesicles to allow its transport along neurites, and subsequent ARF6 activation and neurite growth. This Homo sapiens (Human) protein is Coiled-coil domain-containing protein 120 (CCDC120).